The sequence spans 123 residues: Large ribosomal subunit protein eL8 (123 aa).

This sequence belongs to the eukaryotic ribosomal protein eL8 family. Part of the 50S ribosomal subunit. Probably part of the RNase P complex.

The protein resides in the cytoplasm. Functionally, multifunctional RNA-binding protein that recognizes the K-turn motif in ribosomal RNA, the RNA component of RNase P, box H/ACA, box C/D and box C'/D' sRNAs. The sequence is that of Large ribosomal subunit protein eL8 from Methanopyrus kandleri (strain AV19 / DSM 6324 / JCM 9639 / NBRC 100938).